The following is a 411-amino-acid chain: Dual-specificity RNA methyltransferase RlmN (411 aa).

Glu124 functions as the Proton acceptor in the catalytic mechanism. The Radical SAM core domain maps to 130-379 (EEGRGTLCIS…IRTPRGRDIL (250 aa)). A disulfide bridge links Cys137 with Cys382. Positions 144, 148, and 151 each coordinate [4Fe-4S] cluster. Residues 208–209 (GE), Ser240, 262–264 (SLH), and Asn339 each bind S-adenosyl-L-methionine. The active-site S-methylcysteine intermediate is Cys382.

This sequence belongs to the radical SAM superfamily. RlmN family. The cofactor is [4Fe-4S] cluster.

It localises to the cytoplasm. The catalysed reaction is adenosine(2503) in 23S rRNA + 2 reduced [2Fe-2S]-[ferredoxin] + 2 S-adenosyl-L-methionine = 2-methyladenosine(2503) in 23S rRNA + 5'-deoxyadenosine + L-methionine + 2 oxidized [2Fe-2S]-[ferredoxin] + S-adenosyl-L-homocysteine. It carries out the reaction adenosine(37) in tRNA + 2 reduced [2Fe-2S]-[ferredoxin] + 2 S-adenosyl-L-methionine = 2-methyladenosine(37) in tRNA + 5'-deoxyadenosine + L-methionine + 2 oxidized [2Fe-2S]-[ferredoxin] + S-adenosyl-L-homocysteine. Specifically methylates position 2 of adenine 2503 in 23S rRNA and position 2 of adenine 37 in tRNAs. m2A2503 modification seems to play a crucial role in the proofreading step occurring at the peptidyl transferase center and thus would serve to optimize ribosomal fidelity. The sequence is that of Dual-specificity RNA methyltransferase RlmN from Sinorhizobium fredii (strain NBRC 101917 / NGR234).